We begin with the raw amino-acid sequence, 898 residues long: Fasciclin-2 (898 aa).

An N-terminal signal peptide occupies residues 1–22 (MRTVACAVLLACFMGCLAGAWA). Residues 23–764 (QSAGLEILPN…EDGSEGQMSS (742 aa)) are Extracellular-facing. Ig-like C2-type domains follow at residues 31–124 (PNSE…KQLS), 134–219 (PITW…RPIR), 226–316 (PQMS…VEVT), 321–423 (PRIG…GHLM), and 428–525 (PSFA…IMLR). N-linked (GlcNAc...) asparagine glycans are attached at residues asparagine 35, asparagine 51, asparagine 149, asparagine 192, asparagine 297, and asparagine 328. Cysteine 48 and cysteine 113 form a disulfide bridge. Disulfide bonds link cysteine 156–cysteine 203 and cysteine 248–cysteine 300. Cysteine 343 and cysteine 407 are oxidised to a cystine. 3 N-linked (GlcNAc...) asparagine glycosylation sites follow: asparagine 447, asparagine 457, and asparagine 580. A disulfide bond links cysteine 450 and cysteine 509. Fibronectin type-III domains follow at residues 532 to 626 (AVLQ…TPRI) and 644 to 745 (GTEN…VKDP). A helical transmembrane segment spans residues 765-782 (AAIVVLVVAALLLALLVV). The Cytoplasmic segment spans residues 783-898 (DLVCCLVWRG…TSFVGKDSAV (116 aa)).

Its subcellular location is the membrane. Functionally, neuronal recognition molecule. Involved in a pathway recognition for axons during the development of nerve fascicles. This chain is Fasciclin-2 (FAS2), found in Schistocerca americana (American grasshopper).